The primary structure comprises 441 residues: 2-oxoisovalerate dehydrogenase subunit alpha, mitochondrial (441 aa).

The N-terminal 17 residues, 1-17 (MISQSYRILSRISRNNE), are a transit peptide targeting the mitochondrion. 145 to 147 (QYR) provides a ligand contact to thiamine diphosphate. The K(+) site is built by Ser194, Thr199, and Gln200.

The protein belongs to the BCKDHA family. As to quaternary structure, heterotetramer of alpha and beta chains. The cofactor is thiamine diphosphate.

Its subcellular location is the mitochondrion matrix. It catalyses the reaction N(6)-[(R)-lipoyl]-L-lysyl-[protein] + 3-methyl-2-oxobutanoate + H(+) = N(6)-[(R)-S(8)-2-methylpropanoyldihydrolipoyl]-L-lysyl-[protein] + CO2. The branched-chain alpha-keto dehydrogenase complex catalyzes the overall conversion of alpha-keto acids to acyl-CoA and CO(2). It contains multiple copies of three enzymatic components: branched-chain alpha-keto acid decarboxylase (E1), lipoamide acyltransferase (E2) and lipoamide dehydrogenase (E3). The polypeptide is 2-oxoisovalerate dehydrogenase subunit alpha, mitochondrial (bkdA) (Dictyostelium discoideum (Social amoeba)).